The primary structure comprises 232 residues: Ubiquinone biosynthesis O-methyltransferase (232 aa).

Residues arginine 36, glycine 55, aspartate 76, and methionine 120 each contribute to the S-adenosyl-L-methionine site.

This sequence belongs to the methyltransferase superfamily. UbiG/COQ3 family.

It catalyses the reaction a 3-demethylubiquinol + S-adenosyl-L-methionine = a ubiquinol + S-adenosyl-L-homocysteine + H(+). It carries out the reaction a 3-(all-trans-polyprenyl)benzene-1,2-diol + S-adenosyl-L-methionine = a 2-methoxy-6-(all-trans-polyprenyl)phenol + S-adenosyl-L-homocysteine + H(+). It functions in the pathway cofactor biosynthesis; ubiquinone biosynthesis. O-methyltransferase that catalyzes the 2 O-methylation steps in the ubiquinone biosynthetic pathway. This is Ubiquinone biosynthesis O-methyltransferase from Burkholderia ambifaria (strain MC40-6).